The chain runs to 160 residues: Large ribosomal subunit protein uL30m (160 aa).

The transit peptide at 1–34 (MAGVLRSAFPRPPCRLQTVKKGAESLIGTEWIRH) directs the protein to the mitochondrion. Residues 44–64 (KVFQPKPEDHEKYGGDPQNPH) form a disordered region.

It belongs to the universal ribosomal protein uL30 family. As to quaternary structure, component of the mitochondrial ribosome large subunit (39S) which comprises a 16S rRNA and about 50 distinct proteins.

It is found in the mitochondrion. The polypeptide is Large ribosomal subunit protein uL30m (Mrpl30) (Mus musculus (Mouse)).